Reading from the N-terminus, the 125-residue chain is Glycine cleavage system H protein (125 aa).

The region spanning 22–104 (SYIIGITDFA…YDTGWILKLT (83 aa)) is the Lipoyl-binding domain. An N6-lipoyllysine modification is found at K63.

This sequence belongs to the GcvH family. As to quaternary structure, the glycine cleavage system is composed of four proteins: P, T, L and H. (R)-lipoate serves as cofactor.

Functionally, the glycine cleavage system catalyzes the degradation of glycine. The H protein shuttles the methylamine group of glycine from the P protein to the T protein. Its function is as follows. Is also involved in protein lipoylation via its role as an octanoyl/lipoyl carrier protein intermediate. This Listeria welshimeri serovar 6b (strain ATCC 35897 / DSM 20650 / CCUG 15529 / CIP 8149 / NCTC 11857 / SLCC 5334 / V8) protein is Glycine cleavage system H protein.